Consider the following 620-residue polypeptide: MLPVLYTGLAGLLLLPLLLTCCCPYLLQDVRFFLQLANMARQVRSYRQRRPVRTILHVFLEQARKTPHKPFLLFRDETLTYAQVDRRSNQVARALHDHLGLRQGDCVALFMGNEPAYVWLWLGLLKLGCPMACLNYNIRAKSLLHCFQCCGAKVLLASPELHEAVEEVLPTLKKEGVSVFYVSRTSNTNGVDTVLDKVDGVSADPIPESWRSEVTFTTPAVYIYTSGTTGLPKAATINHHRLWYGTSLALRSGIKAHDVIYTTMPLYHSAALMIGLHGCIVVGATFALRSKFSASQFWDDCRKYNATVIQYIGELLRYLCNTPQKPNDRDHKVKIALGNGLRGDVWREFIKRFGDIHIYEFYASTEGNIGFMNYPRKIGAVGRENYLQKKVVRHELIKYDVEKDEPVRDANGYCIKVPKGEVGLLICKITELTPFFGYAGGKTQTEKKKLRDVFKKGDVYFNSGDLLMIDRENFIYFHDRVGDTFRWKGENVATTEVADIVGLVDFVEEVNVYGVPVPGHEGRIGMASIKMKENYEFNGKKLFQHISEYLPSYSRPRFLRIQDTIEITGTFKHRKVTLMEEGFNPSVIKDTLYFMDDTEKTYVPMTEDIYNAIIDKTLKL.

The Lumenal portion of the chain corresponds to 1–4 (MLPV). A helical membrane pass occupies residues 5–27 (LYTGLAGLLLLPLLLTCCCPYLL). Residues 28–106 (QDVRFFLQLA…DHLGLRQGDC (79 aa)) lie on the Cytoplasmic side of the membrane. A helical transmembrane segment spans residues 107–127 (VALFMGNEPAYVWLWLGLLKL). At 128-267 (GCPMACLNYN…DVIYTTMPLY (140 aa)) the chain is on the lumenal side. 222-233 (YIYTSGTTGLPK) contributes to the AMP binding site. A helical transmembrane segment spans residues 268-288 (HSAALMIGLHGCIVVGATFAL). The Cytoplasmic portion of the chain corresponds to 289–620 (RSKFSASQFW…NAIIDKTLKL (332 aa)). K291 carries the N6-acetyllysine modification. A Phosphothreonine modification is found at T577.

The protein belongs to the ATP-dependent AMP-binding enzyme family. Liver and kidney (at protein level).

The protein localises to the endoplasmic reticulum membrane. The protein resides in the peroxisome membrane. It is found in the cell membrane. It localises to the microsome. It catalyses the reaction a fatty acid(in) = a fatty acid(out). It carries out the reaction (9Z)-octadecenoate(out) = (9Z)-octadecenoate(in). The enzyme catalyses a long-chain fatty acid + ATP + CoA = a long-chain fatty acyl-CoA + AMP + diphosphate. The catalysed reaction is (5Z,8Z,11Z,14Z)-eicosatetraenoate + ATP + CoA = (5Z,8Z,11Z,14Z)-eicosatetraenoyl-CoA + AMP + diphosphate. It catalyses the reaction (9Z,12Z,15Z)-octadecatrienoate + ATP + CoA = (9Z,12Z,15Z)-octadecatrienoyl-CoA + AMP + diphosphate. It carries out the reaction hexadecanoate + ATP + CoA = hexadecanoyl-CoA + AMP + diphosphate. The enzyme catalyses (9Z)-octadecenoate + ATP + CoA = (9Z)-octadecenoyl-CoA + AMP + diphosphate. The catalysed reaction is 2,6,10,14-tetramethylpentadecanoate + ATP + CoA = pristanoyl-CoA + AMP + diphosphate. It catalyses the reaction (E)-hexadec-2-enoate + ATP + CoA = (2E)-hexadecenoyl-CoA + AMP + diphosphate. It carries out the reaction 3,7,11,15-tetramethylhexadecanoate + ATP + CoA = phytanoyl-CoA + AMP + diphosphate. The enzyme catalyses a very long-chain fatty acid + ATP + CoA = a very long-chain fatty acyl-CoA + AMP + diphosphate. The catalysed reaction is tetracosanoate + ATP + CoA = tetracosanoyl-CoA + AMP + diphosphate. It catalyses the reaction (4Z,7Z,10Z,13Z,16Z,19Z)-docosahexaenoate + ATP + CoA = (4Z,7Z,10Z,13Z,16Z,19Z)-docosahexaenoyl-CoA + AMP + diphosphate. It carries out the reaction (25R)-3alpha,7alpha,12alpha-trihydroxy-5beta-cholestan-26-oate + ATP + CoA = (25R)-3alpha,7alpha,12alpha-trihydroxy-5beta-cholestan-26-oyl-CoA + AMP + diphosphate. In terms of biological role, mediates the import of long-chain fatty acids (LCFA) into the cell by facilitating their transport across cell membranes, playing an important role in hepatic fatty acid uptake. Also functions as an acyl-CoA ligase catalyzing the ATP-dependent formation of fatty acyl-CoA using LCFA and very-long-chain fatty acids (VLCFA) as substrates, which prevents fatty acid efflux from cells and might drive more fatty acid uptake. Plays a pivotal role in regulating available LCFA substrates from exogenous sources in tissues undergoing high levels of beta-oxidation or triglyceride synthesis. Can also activate branched-chain fatty acids such as phytanic acid and pristanic acid. May contribute to the synthesis of sphingosine-1-phosphate. Does not activate C24 bile acids, cholate and chenodeoxycholate. In vitro, activates 3-alpha,7-alpha,12-alpha-trihydroxy-5-beta-cholestanate (THCA), the C27 precursor of cholic acid deriving from the de novo synthesis from cholesterol. However, it is not critical for THCA activation and bile synthesis in vivo. This chain is Long-chain fatty acid transport protein 2 (Slc27a2), found in Rattus norvegicus (Rat).